The chain runs to 355 residues: S-adenosylmethionine:tRNA ribosyltransferase-isomerase (355 aa).

It belongs to the QueA family. Monomer.

The protein resides in the cytoplasm. The enzyme catalyses 7-aminomethyl-7-carbaguanosine(34) in tRNA + S-adenosyl-L-methionine = epoxyqueuosine(34) in tRNA + adenine + L-methionine + 2 H(+). Its pathway is tRNA modification; tRNA-queuosine biosynthesis. In terms of biological role, transfers and isomerizes the ribose moiety from AdoMet to the 7-aminomethyl group of 7-deazaguanine (preQ1-tRNA) to give epoxyqueuosine (oQ-tRNA). The protein is S-adenosylmethionine:tRNA ribosyltransferase-isomerase of Burkholderia orbicola (strain MC0-3).